The primary structure comprises 632 residues: Chaperone protein HtpG (632 aa).

Residues methionine 1 to arginine 345 are a; substrate-binding. The tract at residues glutamate 346–arginine 561 is b. The tract at residues leucine 562–histidine 632 is c.

The protein belongs to the heat shock protein 90 family. In terms of assembly, homodimer.

It is found in the cytoplasm. In terms of biological role, molecular chaperone. Has ATPase activity. This is Chaperone protein HtpG from Chromohalobacter salexigens (strain ATCC BAA-138 / DSM 3043 / CIP 106854 / NCIMB 13768 / 1H11).